The following is a 107-amino-acid chain: Large ribosomal subunit protein uL23 (107 aa).

It belongs to the universal ribosomal protein uL23 family. As to quaternary structure, part of the 50S ribosomal subunit. Contacts protein L29, and trigger factor when it is bound to the ribosome.

Functionally, one of the early assembly proteins it binds 23S rRNA. One of the proteins that surrounds the polypeptide exit tunnel on the outside of the ribosome. Forms the main docking site for trigger factor binding to the ribosome. The protein is Large ribosomal subunit protein uL23 of Rhodopirellula baltica (strain DSM 10527 / NCIMB 13988 / SH1).